A 434-amino-acid polypeptide reads, in one-letter code: O-phosphoseryl-tRNA(Sec) selenium transferase (434 aa).

The tetramerization stretch occupies residues 1–40 (MGLNITGLIPKHMENRGKLTLKENLKIIENILEQRKAPEN). Arginine 71 provides a ligand contact to pyridoxal 5'-phosphate. Positions 92–102 (GRSGNLIDPQP) are phosphate loop (P-loop). 3 residues coordinate substrate: arginine 93, serine 94, and glutamine 101. At lysine 277 the chain carries N6-(pyridoxal phosphate)lysine. Arginine 306 serves as a coordination point for substrate.

This sequence belongs to the SepSecS family. As to quaternary structure, homotetramer. Pyridoxal 5'-phosphate is required as a cofactor.

The enzyme catalyses O-phospho-L-seryl-tRNA(Sec) + selenophosphate + H2O = L-selenocysteinyl-tRNA(Sec) + 2 phosphate. It participates in aminoacyl-tRNA biosynthesis; selenocysteinyl-tRNA(Sec) biosynthesis; selenocysteinyl-tRNA(Sec) from L-seryl-tRNA(Sec) (archaeal/eukaryal route): step 2/2. Converts O-phosphoseryl-tRNA(Sec) to selenocysteinyl-tRNA(Sec) required for selenoprotein biosynthesis. The protein is O-phosphoseryl-tRNA(Sec) selenium transferase (spcS) of Methanocaldococcus jannaschii (strain ATCC 43067 / DSM 2661 / JAL-1 / JCM 10045 / NBRC 100440) (Methanococcus jannaschii).